The primary structure comprises 77 residues: Beta-defensin 135 (77 aa).

Positions 1–24 (MATRSVLLALVVLNLLFYVPPGRS) are cleaved as a signal peptide. 3 disulfides stabilise this stretch: C37–C64, C44–C58, and C48–C65.

It belongs to the beta-defensin family.

It is found in the secreted. Has antibacterial activity. In Homo sapiens (Human), this protein is Beta-defensin 135 (DEFB135).